Consider the following 372-residue polypeptide: GDP-mannose 4,6-dehydratase (372 aa).

NADP(+) is bound by residues G8–D13, D63–L64, L85–S89, and Y100. The active site involves T132. Catalysis depends on nucleophile residues E134 and Y156. NADP(+) is bound by residues K160, H186, and R191.

It belongs to the NAD(P)-dependent epimerase/dehydratase family. GDP-mannose 4,6-dehydratase subfamily. Requires NADP(+) as cofactor.

The catalysed reaction is GDP-alpha-D-mannose = GDP-4-dehydro-alpha-D-rhamnose + H2O. It participates in bacterial outer membrane biogenesis; LPS O-antigen biosynthesis. Its pathway is nucleotide-sugar biosynthesis; GDP-L-fucose biosynthesis via de novo pathway; GDP-L-fucose from GDP-alpha-D-mannose: step 1/2. Functionally, catalyzes the conversion of GDP-D-mannose to GDP-4-dehydro-6-deoxy-D-mannose. The sequence is that of GDP-mannose 4,6-dehydratase from Yersinia enterocolitica serotype O:8 / biotype 1B (strain NCTC 13174 / 8081).